A 127-amino-acid polypeptide reads, in one-letter code: Putative adhesin P1-like protein MPN_203 (127 aa).

Residues 70–90 (TENFTQPQPQPQALKTTTPVF) form a disordered region.

It belongs to the adhesin P1 family.

This is Putative adhesin P1-like protein MPN_203 from Mycoplasma pneumoniae (strain ATCC 29342 / M129 / Subtype 1) (Mycoplasmoides pneumoniae).